A 301-amino-acid polypeptide reads, in one-letter code: Ornithine carbamoyltransferase (301 aa).

Residues arginine 100 and 127–130 each bind carbamoyl phosphate; that span reads HPCQ. Residues asparagine 158, aspartate 221, and 225-226 each bind L-ornithine; that span reads SM. Carbamoyl phosphate-binding residues include cysteine 260 and arginine 288.

This sequence belongs to the aspartate/ornithine carbamoyltransferase superfamily. OTCase family.

It localises to the cytoplasm. The catalysed reaction is carbamoyl phosphate + L-ornithine = L-citrulline + phosphate + H(+). Its pathway is amino-acid biosynthesis; L-arginine biosynthesis; L-arginine from L-ornithine and carbamoyl phosphate: step 1/3. In terms of biological role, reversibly catalyzes the transfer of the carbamoyl group from carbamoyl phosphate (CP) to the N(epsilon) atom of ornithine (ORN) to produce L-citrulline. In Vibrio sp. (strain 2693), this protein is Ornithine carbamoyltransferase (argF).